Consider the following 440-residue polypeptide: Protein scalloped (440 aa).

Residues 32–65 (TEQQAVGPGTIPSPWTPVNAGPPGALGSADTNGS) are disordered. Residues 86–162 (SADAEGVWSP…QVLARRKLRE (77 aa)) constitute a DNA-binding region (TEA).

The C-terminus of sd interacts with the C-terminal serine-rich protein domain of vg, to form a complex which acts as a selector for wing development. Interacts (via C-terminus) with yki (via N-terminus) and this interaction enhances its transcriptional activity. Subset of neuroblasts in the central nervous system and in the peripheral sense organs of the embryo. Expressed in the developing wing primordia initially along the D/V wing boundary, and by the late third larval instar, maximal expression is seen in cells at the D/V wing disk boundary. Less expression in cells located farther from this boundary. Also expressed in wing progenitor cells.

The protein resides in the nucleus. Its function is as follows. Transcription factor which plays a key role in the Hippo/SWH (Sav/Wts/Hpo) signaling pathway, a signaling pathway that plays a pivotal role in organ size control and tumor suppression by restricting proliferation and promoting apoptosis. The core of this pathway is composed of a kinase cascade wherein Hippo (Hpo), in complex with its regulatory protein Salvador (Sav), phosphorylates and activates Warts (Wts) in complex with its regulatory protein Mats, which in turn phosphorylates and inactivates the Yorkie (Yki) oncoprotein. The Hippo/SWH signaling pathway inhibits the activity of the transcriptional complex formed by Scalloped (sd) and Yki and the target genes of this pathway include cyclin-E (cycE), diap1 and bantam. Sd promotes nuclear localization of Yki. Involved in the regulation of cell-specific gene expression during development, particularly in the differentiation of the nervous system. When in combination with vestigial (vg) it acts as a transcriptional activation complex that regulates gene expression in the wing. Binding to vg switches the DNA target selectivity of sd. Required autonomously for cell proliferation and viability within the wing blade. Required for proper sensory organ precursor (SOP) differentiation at the wing margin; required for correct expression of sens. This chain is Protein scalloped (sd), found in Drosophila melanogaster (Fruit fly).